The following is a 468-amino-acid chain: Monogalactosyldiacylglycerol synthase 2, chloroplastic (468 aa).

UDP is bound by residues histidine 82, arginine 251, 361 to 365 (GTIAE), and glutamate 383.

This sequence belongs to the glycosyltransferase 28 family. Expressed mainly in floral buds. Detected in roots, leaves, stems, siliques and pollen tubes.

Its subcellular location is the plastid. The protein resides in the chloroplast outer membrane. The enzyme catalyses a 1,2-diacyl-sn-glycerol + UDP-alpha-D-galactose = a 1,2-diacyl-3-O-(beta-D-galactosyl)-sn-glycerol + UDP + H(+). It carries out the reaction 1,2-di-(9Z,12Z-octadecadienoyl)-sn-glycerol + UDP-alpha-D-galactose = 1,2-di-(9Z,12Z-octadecadienoyl)-3-beta-D-galactosyl-sn-glycerol + UDP + H(+). It catalyses the reaction 1-(9Z-octadecenoyl)-2-hexadecanoyl-sn-glycerol + UDP-alpha-D-galactose = 1-(9Z-octadecenoyl)-2-hexadecanoyl-3-beta-D-galactosyl-sn-glycerol + UDP + H(+). The catalysed reaction is 1,2-di-(9Z-octadecenoyl)-sn-glycerol + UDP-alpha-D-galactose = 1,2-di-(9Z-octadecenoyl)-3-beta-D-galactosyl-sn-glycerol + UDP + H(+). With respect to regulation, inhibited by galvestine-1. Involved in the synthesis of monogalactosyldiacylglycerol, the major structural component of photosynthetic membranes and in the chloroplast envelope biogenesis. Can use both prokaryotic (18:1/16:0) or eukaryotic (18:2/18:2) 1,2-diacylglycerol species, but operates with some preference for the eukaryotic one. Plays a minor role in galactolipid synthesis in chloroplasts. Is required for membrane lipid remodeling in phosphate-starved roots. Acts as the minor factor involved in digalactosyldiacylglycerol (DGDG) biosynthesis in phosphate-starved roots. Does not seem to be required for plant growth under nutrient-sufficient conditions. Required for membrane lipid remodeling in plants grown in acidic conditions. The chain is Monogalactosyldiacylglycerol synthase 2, chloroplastic from Arabidopsis thaliana (Mouse-ear cress).